Consider the following 292-residue polypeptide: Ornithine decarboxylase antizyme (292 aa).

It belongs to the ODC antizyme family. As to quaternary structure, interacts with ODC/SPE1 and thereby sterically blocks ODC homodimerization.

In terms of biological role, ornithine decarboxylase (ODC) antizyme protein that negatively regulates ODC activity and intracellular polyamine biosynthesis in response to increased intracellular polyamine levels. Binds to ODC/SPE1 monomers, inhibiting the assembly of the functional ODC homodimer, and targets the monomers for ubiquitin-independent proteolytic destruction by the 26S proteasome. The chain is Ornithine decarboxylase antizyme (OAZ1) from Saccharomyces cerevisiae (strain ATCC 204508 / S288c) (Baker's yeast).